A 140-amino-acid polypeptide reads, in one-letter code: Histone H2B (140 aa).

The span at 1–10 shows a compositional bias: basic and acidic residues; the sequence is MPPKAAEKKP. The disordered stretch occupies residues 1–48; sequence MPPKAAEKKPTTGGKAPAGKAPAEKKEAGKKTAAAASGDKKKRGKTRK. Lys-8 and Lys-9 each carry N6-acetyllysine; alternate. Residues Lys-8 and Lys-9 each participate in a glycyl lysine isopeptide (Lys-Gly) (interchain with G-Cter in SUMO); alternate cross-link. Residues 11-21 show a composition bias toward low complexity; the sequence is TTGGKAPAGKA. Lys-15 is subject to N6-acetyllysine. Lys-25 bears the N6-acetyllysine; alternate mark. Lys-25 is covalently cross-linked (Glycyl lysine isopeptide (Lys-Gly) (interchain with G-Cter in SUMO); alternate). Lys-26 participates in a covalent cross-link: Glycyl lysine isopeptide (Lys-Gly) (interchain with G-Cter in SUMO). Residue Lys-134 forms a Glycyl lysine isopeptide (Lys-Gly) (interchain with G-Cter in ubiquitin) linkage.

Belongs to the histone H2B family. As to quaternary structure, the nucleosome is a histone octamer containing two molecules each of H2A, H2B, H3 and H4 assembled in one H3-H4 heterotetramer and two H2A-H2B heterodimers. The octamer wraps approximately 147 bp of DNA. Post-translationally, monoubiquitinated by the ubc2-bre1 complex to form H2BK123ub1. H2BK123ub1 gives a specific tag for epigenetic transcriptional activation and is also prerequisite for H3K4me and H3K79me formation. H2BK123ub1 also modulates the formation of double-strand breaks during meiosis and is a prerequisite for DNA-damage checkpoint activation. In terms of processing, acetylated by gcn5 to form H2BK11ac and H2BK16ac. H2BK16ac can also be formed by esa1. Acetylation of N-terminal lysines and particularly formation of H2BK11acK16ac has a positive effect on transcription. Sumoylation to form H2BK6su or H2BK7su, and probably also H2BK16su or H2BK17su, occurs preferentially near the telomeres and represses gene transcription.

Its subcellular location is the nucleus. It is found in the chromosome. Core component of nucleosome. Nucleosomes wrap and compact DNA into chromatin, limiting DNA accessibility to the cellular machineries which require DNA as a template. Histones thereby play a central role in transcription regulation, DNA repair, DNA replication and chromosomal stability. DNA accessibility is regulated via a complex set of post-translational modifications of histones, also called histone code, and nucleosome remodeling. The protein is Histone H2B (htb1) of Aspergillus terreus (strain NIH 2624 / FGSC A1156).